A 203-amino-acid chain; its full sequence is Translation initiation factor IF-3 (203 aa).

Basic and acidic residues predominate over residues 172-182; it reads EAPKNEKKTKE. The disordered stretch occupies residues 172–203; it reads EAPKNEKKTKENNPPFNRINLMKGENHAKNED.

The protein belongs to the IF-3 family. Monomer.

Its subcellular location is the cytoplasm. IF-3 binds to the 30S ribosomal subunit and shifts the equilibrium between 70S ribosomes and their 50S and 30S subunits in favor of the free subunits, thus enhancing the availability of 30S subunits on which protein synthesis initiation begins. This is Translation initiation factor IF-3 from Helicobacter pylori (strain ATCC 700392 / 26695) (Campylobacter pylori).